The sequence spans 572 residues: Probable catabolite repression protein creC (572 aa).

Residues 36–61 form a disordered region; the sequence is HLATPPPHPSEAPVVNPNPLATVPTP. 4 WD repeats span residues 226–266, 306–347, 348–387, and 390–434; these read VSNS…ALFT, LANQ…DIFR, SYYG…IVAR, and GHNS…LHRP. Disordered regions lie at residues 458–486 and 541–572; these read HRAD…SAVR and NDSY…MGSL. One copy of the WD 5 repeat lies at 506 to 543; the sequence is VGDDPICWLGFQEDSIMTSSLEGHIRTWDRPREGINDS. Residues 549–572 show a composition bias toward low complexity; the sequence is SSPAISTSAAGSGSGIADSAMGSL.

Belongs to the WD repeat creC family. Interacts with creB.

Component of the regulatory network controlling carbon source utilization through ubiquitination and deubiquitination involving creA, creB, creC, creD and acrB. Required to prevent the proteolysis of the CreB deubiquitinating enzyme in the absence of carbon catabolite repression. CreB deubiquitinating enzyme stabilized in a complex with the CreC leads to the expression of genes such as those in the proline and quinate pathways. In Aspergillus flavus (strain ATCC 200026 / FGSC A1120 / IAM 13836 / NRRL 3357 / JCM 12722 / SRRC 167), this protein is Probable catabolite repression protein creC (creC).